Reading from the N-terminus, the 155-residue chain is Putative pre-16S rRNA nuclease (155 aa).

This sequence belongs to the YqgF nuclease family.

It localises to the cytoplasm. Functionally, could be a nuclease involved in processing of the 5'-end of pre-16S rRNA. This Xanthomonas oryzae pv. oryzae (strain MAFF 311018) protein is Putative pre-16S rRNA nuclease.